A 324-amino-acid chain; its full sequence is UDP-N-acetylenolpyruvoylglucosamine reductase (324 aa).

An FAD-binding PCMH-type domain is found at 36-203 (FRAGGLAELM…TSVLFEGYPE (168 aa)). Arg183 is a catalytic residue. Residue Ser232 is the Proton donor of the active site. Glu302 is a catalytic residue.

It belongs to the MurB family. It depends on FAD as a cofactor.

It localises to the cytoplasm. The enzyme catalyses UDP-N-acetyl-alpha-D-muramate + NADP(+) = UDP-N-acetyl-3-O-(1-carboxyvinyl)-alpha-D-glucosamine + NADPH + H(+). It participates in cell wall biogenesis; peptidoglycan biosynthesis. Its function is as follows. Cell wall formation. The sequence is that of UDP-N-acetylenolpyruvoylglucosamine reductase from Rhizobium etli (strain CIAT 652).